Reading from the N-terminus, the 444-residue chain is Trigger factor (444 aa).

A PPIase FKBP-type domain is found at 166–251 (GDQVVIDFKG…VKAVKAPKAA (86 aa)).

This sequence belongs to the FKBP-type PPIase family. Tig subfamily.

It localises to the cytoplasm. It carries out the reaction [protein]-peptidylproline (omega=180) = [protein]-peptidylproline (omega=0). Involved in protein export. Acts as a chaperone by maintaining the newly synthesized protein in an open conformation. Functions as a peptidyl-prolyl cis-trans isomerase. This Cereibacter sphaeroides (strain ATCC 17029 / ATH 2.4.9) (Rhodobacter sphaeroides) protein is Trigger factor.